The following is a 510-amino-acid chain: MALEITPALSLLDEHHLLKEVVNEQKLTFENVTYDSRKVSDNTLFFCKGNFKPSYLTSALEKGATAYVSEQKYAEGMDATGIIVTNVQKAMALLGAAFYGFPQNELFIIAYTGTKGKTTSAYFAEHILAKATDKKVALFSTIDRVLGNEPDQRFKSDLTTPESLDLFHDMRAAVNNGMTHLVMEVSSQAYKKNRVYGLTFDVGVFLNISPDHIGRNEHPTFDDYLHCKEQLLVNSKRCVINGETAYLRDVYYTAKATTEPEDIYVFARKGAQISDNIPVDIEYQNDFEDLHKSVIEVKGLSDKAQTLHVDGKYELSVPGDYNEGNATSAIIATLLAGAKGEDARKTLDRVHIPGRMEIIKTKNNGTIYVDYAHNYASLKALFAFLKQQTHAGRVIAVLGSPGDKGISRRPGFGKAVSEEVDHVILTTDDPGFEDPMKIAQEIDSYINHDNVKVEFELDREIAIEKAIKMSTNNDIVVLAGKGEDPYQKIKGVDVPYPSDVNVAKKIVEEL.

Ser-36 is a binding site for UDP-N-acetyl-alpha-D-muramoyl-L-alanyl-D-glutamate. Residue 113-119 coordinates ATP; sequence GTKGKTT. UDP-N-acetyl-alpha-D-muramoyl-L-alanyl-D-glutamate contacts are provided by residues 159–160, Ser-186, and Arg-194; that span reads TT. Residue Lys-228 is modified to N6-carboxylysine.

It belongs to the MurCDEF family. MurE subfamily. Post-translationally, carboxylation is probably crucial for Mg(2+) binding and, consequently, for the gamma-phosphate positioning of ATP.

The protein resides in the cytoplasm. It participates in cell wall biogenesis; peptidoglycan biosynthesis. Functionally, catalyzes the addition of an amino acid to the nucleotide precursor UDP-N-acetylmuramoyl-L-alanyl-D-glutamate (UMAG) in the biosynthesis of bacterial cell-wall peptidoglycan. The sequence is that of UDP-N-acetylmuramyl-tripeptide synthetase from Ligilactobacillus salivarius (strain UCC118) (Lactobacillus salivarius).